The chain runs to 1590 residues: Pentafunctional AROM polypeptide (1590 aa).

Residues 1–387 are 3-dehydroquinate synthase; the sequence is MGSTTFENPT…YEPKASVVED (387 aa). NAD(+) is bound by residues 49 to 51, 86 to 89, 117 to 119, and Asp-122; these read DTN, ENSK, and GGV. Arg-133 lines the 7-phospho-2-dehydro-3-deoxy-D-arabino-heptonate pocket. Residue 142–143 participates in NAD(+) binding; the sequence is TT. Positions 149 and 155 each coordinate 7-phospho-2-dehydro-3-deoxy-D-arabino-heptonate. Lys-164 is a binding site for NAD(+). Residue Asn-165 coordinates 7-phospho-2-dehydro-3-deoxy-D-arabino-heptonate. NAD(+) contacts are provided by residues 182-185 and Asn-193; that span reads FLET. Glu-197 provides a ligand contact to Zn(2+). Residues 197–200 and Lys-253 contribute to the 7-phospho-2-dehydro-3-deoxy-D-arabino-heptonate site; that span reads EVVK. Glu-263 functions as the Proton acceptor; for 3-dehydroquinate synthase activity in the catalytic mechanism. Residues 267–271 and His-274 each bind 7-phospho-2-dehydro-3-deoxy-D-arabino-heptonate; that span reads RNILN. Position 274 (His-274) interacts with Zn(2+). His-278 acts as the Proton acceptor; for 3-dehydroquinate synthase activity in catalysis. His-290 and Lys-359 together coordinate 7-phospho-2-dehydro-3-deoxy-D-arabino-heptonate. His-290 contacts Zn(2+). Residues 400–841 form an EPSP synthase region; that stretch reads VRPSVPETLN…WDILSKSFQV (442 aa). Cys-823 acts as the For EPSP synthase activity in catalysis. The segment at 863–1055 is shikimate kinase; it reads DKSIFIIGMR…RNKPQSFFVS (193 aa). 870–877 lines the ATP pocket; the sequence is GMRGAGKT. A 3-dehydroquinase region spans residues 1056 to 1276; sequence LTMPDISGAA…AAPGQLSAAE (221 aa). His-1179 acts as the Proton acceptor; for 3-dehydroquinate dehydratase activity in catalysis. Lys-1207 (schiff-base intermediate with substrate; for 3-dehydroquinate dehydratase activity) is an active-site residue. The segment at 1289 to 1590 is shikimate dehydrogenase; the sequence is PKSFYLFGTP…KMDKHPTFVC (302 aa).

The protein in the N-terminal section; belongs to the sugar phosphate cyclases superfamily. Dehydroquinate synthase family. This sequence in the 2nd section; belongs to the EPSP synthase family. In the 3rd section; belongs to the shikimate kinase family. It in the 4th section; belongs to the type-I 3-dehydroquinase family. The protein in the C-terminal section; belongs to the shikimate dehydrogenase family. As to quaternary structure, homodimer. The cofactor is Zn(2+).

The protein resides in the cytoplasm. It catalyses the reaction 7-phospho-2-dehydro-3-deoxy-D-arabino-heptonate = 3-dehydroquinate + phosphate. It carries out the reaction 3-dehydroquinate = 3-dehydroshikimate + H2O. The catalysed reaction is shikimate + NADP(+) = 3-dehydroshikimate + NADPH + H(+). The enzyme catalyses shikimate + ATP = 3-phosphoshikimate + ADP + H(+). It catalyses the reaction 3-phosphoshikimate + phosphoenolpyruvate = 5-O-(1-carboxyvinyl)-3-phosphoshikimate + phosphate. Its pathway is metabolic intermediate biosynthesis; chorismate biosynthesis; chorismate from D-erythrose 4-phosphate and phosphoenolpyruvate: step 2/7. It functions in the pathway metabolic intermediate biosynthesis; chorismate biosynthesis; chorismate from D-erythrose 4-phosphate and phosphoenolpyruvate: step 3/7. The protein operates within metabolic intermediate biosynthesis; chorismate biosynthesis; chorismate from D-erythrose 4-phosphate and phosphoenolpyruvate: step 4/7. It participates in metabolic intermediate biosynthesis; chorismate biosynthesis; chorismate from D-erythrose 4-phosphate and phosphoenolpyruvate: step 5/7. Its pathway is metabolic intermediate biosynthesis; chorismate biosynthesis; chorismate from D-erythrose 4-phosphate and phosphoenolpyruvate: step 6/7. Its function is as follows. The AROM polypeptide catalyzes 5 consecutive enzymatic reactions in prechorismate polyaromatic amino acid biosynthesis. This is Pentafunctional AROM polypeptide from Sclerotinia sclerotiorum (White mold).